A 209-amino-acid polypeptide reads, in one-letter code: Thymidine kinase (209 aa).

Residues 9-16 (SAMNAGKT) and 88-91 (DEAQ) contribute to the ATP site. The Proton acceptor role is filled by Glu89.

Belongs to the thymidine kinase family. As to quaternary structure, homotetramer.

It is found in the cytoplasm. The catalysed reaction is thymidine + ATP = dTMP + ADP + H(+). This is Thymidine kinase from Xanthomonas campestris pv. campestris (strain 8004).